The chain runs to 473 residues: ATP synthase subunit beta (473 aa).

158-165 (GGAGVGKT) is a binding site for ATP.

The protein belongs to the ATPase alpha/beta chains family. As to quaternary structure, F-type ATPases have 2 components, CF(1) - the catalytic core - and CF(0) - the membrane proton channel. CF(1) has five subunits: alpha(3), beta(3), gamma(1), delta(1), epsilon(1). CF(0) has three main subunits: a(1), b(2) and c(9-12). The alpha and beta chains form an alternating ring which encloses part of the gamma chain. CF(1) is attached to CF(0) by a central stalk formed by the gamma and epsilon chains, while a peripheral stalk is formed by the delta and b chains.

Its subcellular location is the cell membrane. It catalyses the reaction ATP + H2O + 4 H(+)(in) = ADP + phosphate + 5 H(+)(out). Its function is as follows. Produces ATP from ADP in the presence of a proton gradient across the membrane. The catalytic sites are hosted primarily by the beta subunits. The protein is ATP synthase subunit beta of Bacillus velezensis (strain DSM 23117 / BGSC 10A6 / LMG 26770 / FZB42) (Bacillus amyloliquefaciens subsp. plantarum).